The following is a 491-amino-acid chain: Ketol-acid reductoisomerase (NADP(+)) (491 aa).

The KARI N-terminal Rossmann domain occupies 15–208 (AQLGKCRFMG…GGHRAGVLES (194 aa)). Residues 45–48 (CGAQ), Arg68, Arg76, Ser78, and 108–110 (DKQ) each bind NADP(+). His132 is a catalytic residue. NADP(+) is bound at residue Gly158. KARI C-terminal knotted domains are found at residues 209–344 (SFVA…TAPQ) and 345–484 (FEGK…MTDM). Asp217, Glu221, Glu389, and Glu393 together coordinate Mg(2+). Substrate is bound at residue Ser414.

This sequence belongs to the ketol-acid reductoisomerase family. Mg(2+) is required as a cofactor.

It carries out the reaction (2R)-2,3-dihydroxy-3-methylbutanoate + NADP(+) = (2S)-2-acetolactate + NADPH + H(+). The catalysed reaction is (2R,3R)-2,3-dihydroxy-3-methylpentanoate + NADP(+) = (S)-2-ethyl-2-hydroxy-3-oxobutanoate + NADPH + H(+). It functions in the pathway amino-acid biosynthesis; L-isoleucine biosynthesis; L-isoleucine from 2-oxobutanoate: step 2/4. It participates in amino-acid biosynthesis; L-valine biosynthesis; L-valine from pyruvate: step 2/4. Involved in the biosynthesis of branched-chain amino acids (BCAA). Catalyzes an alkyl-migration followed by a ketol-acid reduction of (S)-2-acetolactate (S2AL) to yield (R)-2,3-dihydroxy-isovalerate. In the isomerase reaction, S2AL is rearranged via a Mg-dependent methyl migration to produce 3-hydroxy-3-methyl-2-ketobutyrate (HMKB). In the reductase reaction, this 2-ketoacid undergoes a metal-dependent reduction by NADPH to yield (R)-2,3-dihydroxy-isovalerate. The sequence is that of Ketol-acid reductoisomerase (NADP(+)) from Salmonella heidelberg (strain SL476).